A 631-amino-acid polypeptide reads, in one-letter code: BTB/POZ domain-containing protein At1g67900 (631 aa).

A BTB domain is found at 28-93; the sequence is SDFTIEVSGS…CYGITITISA (66 aa). The 310-residue stretch at 200 to 509 folds into the NPH3 domain; that stretch reads GWWAEDIAEL…VQVLFYEQAR (310 aa). The segment at 361-399 is disordered; the sequence is QTSPPTSPLRGKKGMMDRRRRSRSAENIDLEFQESRRSS. Over residues 370 to 382 the composition is skewed to basic residues; the sequence is RGKKGMMDRRRRS. The residue at position 450 (Tyr450) is a Phosphotyrosine. Residue Ser567 is modified to Phosphoserine.

It belongs to the NPH3 family.

Its pathway is protein modification; protein ubiquitination. In terms of biological role, may act as a substrate-specific adapter of an E3 ubiquitin-protein ligase complex (CUL3-RBX1-BTB) which mediates the ubiquitination and subsequent proteasomal degradation of target proteins. The chain is BTB/POZ domain-containing protein At1g67900 from Arabidopsis thaliana (Mouse-ear cress).